A 405-amino-acid chain; its full sequence is Tryptophan synthase beta chain (405 aa).

An N6-(pyridoxal phosphate)lysine modification is found at K98.

Belongs to the TrpB family. As to quaternary structure, tetramer of two alpha and two beta chains. It depends on pyridoxal 5'-phosphate as a cofactor.

It catalyses the reaction (1S,2R)-1-C-(indol-3-yl)glycerol 3-phosphate + L-serine = D-glyceraldehyde 3-phosphate + L-tryptophan + H2O. The protein operates within amino-acid biosynthesis; L-tryptophan biosynthesis; L-tryptophan from chorismate: step 5/5. Its function is as follows. The beta subunit is responsible for the synthesis of L-tryptophan from indole and L-serine. This Xanthomonas campestris pv. campestris (strain 8004) protein is Tryptophan synthase beta chain.